Reading from the N-terminus, the 257-residue chain is Pyridoxine 5'-phosphate synthase (257 aa).

Position 6 (Asn-6) interacts with 3-amino-2-oxopropyl phosphate. A 1-deoxy-D-xylulose 5-phosphate-binding site is contributed by Asp-8–His-9. Arg-17 is a 3-amino-2-oxopropyl phosphate binding site. The active-site Proton acceptor is the His-41. 1-deoxy-D-xylulose 5-phosphate-binding residues include Arg-43 and His-48. The active-site Proton acceptor is the Glu-68. Thr-98 provides a ligand contact to 1-deoxy-D-xylulose 5-phosphate. Catalysis depends on His-210, which acts as the Proton donor. Residues Gly-211 and Gly-232–Gln-233 each bind 3-amino-2-oxopropyl phosphate.

This sequence belongs to the PNP synthase family. Homooctamer; tetramer of dimers.

The protein resides in the cytoplasm. The catalysed reaction is 3-amino-2-oxopropyl phosphate + 1-deoxy-D-xylulose 5-phosphate = pyridoxine 5'-phosphate + phosphate + 2 H2O + H(+). It participates in cofactor biosynthesis; pyridoxine 5'-phosphate biosynthesis; pyridoxine 5'-phosphate from D-erythrose 4-phosphate: step 5/5. Functionally, catalyzes the complicated ring closure reaction between the two acyclic compounds 1-deoxy-D-xylulose-5-phosphate (DXP) and 3-amino-2-oxopropyl phosphate (1-amino-acetone-3-phosphate or AAP) to form pyridoxine 5'-phosphate (PNP) and inorganic phosphate. The polypeptide is Pyridoxine 5'-phosphate synthase (Campylobacter jejuni subsp. doylei (strain ATCC BAA-1458 / RM4099 / 269.97)).